Here is a 427-residue protein sequence, read N- to C-terminus: rRNA-processing protein EBP2 (427 aa).

Composition is skewed to basic and acidic residues over residues 29–40 (KKKSQELKKEEP) and 49–65 (KKLE…KEVA). Residues 29 to 190 (KKKSQELKKE…FDSDADVVPH (162 aa)) are disordered. Residues 45-174 (ASNLKKLEKK…KEEQEEEQDV (130 aa)) are a coiled coil. Residues 79 to 88 (KEKRKLKKEL) are compositionally biased toward basic residues. The span at 89 to 105 (KKMQEQDATEAQKHMSG) shows a compositional bias: basic and acidic residues. At Ser104 the chain carries Phosphoserine. Over residues 106–126 (DEDESGDDREEEEEEEEEEEG) the composition is skewed to acidic residues. Residues 127–138 (RLDLEKLAKSDS) show a composition bias toward basic and acidic residues. Composition is skewed to acidic residues over residues 139–155 (ESED…EDED) and 163–185 (EEKE…DSDA). Phosphoserine is present on residues Ser177 and Ser183. Coiled-coil stretches lie at residues 234-265 (KDIY…KRLK) and 291-348 (KLIE…KHNE). The disordered stretch occupies residues 361 to 427 (EVEGKRFDRG…PGKSRRARRF (67 aa)). A compositionally biased stretch (polar residues) spans 397–407 (ATSSADVSGFS). Over residues 409–427 (RKMKGKTNRPGKSRRARRF) the composition is skewed to basic residues.

Belongs to the EBP2 family. In terms of assembly, interacts with LOC1, NOP12, SIZ2, ULS1 and WSS1. In terms of processing, sumoylated.

The protein localises to the nucleus. Its subcellular location is the nucleolus. Functionally, required for the processing of the 27S pre-rRNA. Probably involved in the step of the processing of the 27 SA precursor into the 27 SB intermediate. In Saccharomyces cerevisiae (strain ATCC 204508 / S288c) (Baker's yeast), this protein is rRNA-processing protein EBP2 (EBP2).